The sequence spans 139 residues: ATP synthase epsilon chain (139 aa).

It belongs to the ATPase epsilon chain family. F-type ATPases have 2 components, CF(1) - the catalytic core - and CF(0) - the membrane proton channel. CF(1) has five subunits: alpha(3), beta(3), gamma(1), delta(1), epsilon(1). CF(0) has three main subunits: a, b and c.

It is found in the cell inner membrane. Functionally, produces ATP from ADP in the presence of a proton gradient across the membrane. The protein is ATP synthase epsilon chain of Actinobacillus pleuropneumoniae serotype 5b (strain L20).